A 186-amino-acid chain; its full sequence is Elongation factor P (186 aa).

This sequence belongs to the elongation factor P family.

The protein resides in the cytoplasm. The protein operates within protein biosynthesis; polypeptide chain elongation. Involved in peptide bond synthesis. Stimulates efficient translation and peptide-bond synthesis on native or reconstituted 70S ribosomes in vitro. Probably functions indirectly by altering the affinity of the ribosome for aminoacyl-tRNA, thus increasing their reactivity as acceptors for peptidyl transferase. The protein is Elongation factor P of Prochlorococcus marinus (strain MIT 9312).